A 536-amino-acid polypeptide reads, in one-letter code: Pre-mRNA 3'-end-processing factor FIP1 (536 aa).

Basic and acidic residues-rich tracts occupy residues 1–10 (MSAGEVERLV) and 32–42 (VHVHSDLAKDL). Disordered stretches follow at residues 1–95 (MSAG…EDDV), 212–246 (VQQGRTGNSEKEAALPSTKAEFTSPPSLFKTGLPP), and 300–536 (FPPG…APAE). The tract at residues 1–110 (MSAGEVERLV…DIKTGAPQYG (110 aa)) is sufficient for interaction with PAPOLA. The segment at 1–296 (MSAGEVERLV…TEVDNNFSKP (296 aa)) is necessary for stimulating PAPOLA activity. 2 stretches are compositionally biased toward acidic residues: residues 43–54 (DENEVERPEEEN) and 80–94 (TEDDSDSDSDDDEDD). Residues S84, S86, and S88 each carry the phosphoserine modification. The interval 136-219 (KGVDLDAPGS…ITVQQGRTGN (84 aa)) is sufficient for interaction with CPSF4. Residues 300–344 (FPPGAPPTHLPPPPFLPPPPTVSTAPPLIPPPGFPPPPGAPPPSL) show a composition bias toward pro residues. Phosphotyrosine is present on Y366. Residues 374 to 390 (LTSSAPSWPSLVDTTKQ) are compositionally biased toward polar residues. The segment at 383-536 (SLVDTTKQWD…QESTEAAPAE (154 aa)) is sufficient for interaction with CPSF1 and CSTF3. A compositionally biased stretch (basic and acidic residues) spans 394–434 (YARREKDRDRDRERDRDRERERDRDRERERTRERERERDHS). The tract at residues 397-432 (REKDRDRDRERDRDRERERDRDRERERTRERERERD) is arg/Asp/Glu-rich domain. The residue at position 434 (S434) is a Phosphoserine. T436 is modified (phosphothreonine). Residues S438 and S442 each carry the phosphoserine modification. The segment covering 443–470 (DEERYRYREYAERGYERHRASREKEERH) has biased composition (basic and acidic residues). The segment covering 484 to 493 (KSSRSNSRRR) has biased composition (basic residues). At S496 the chain carries Phosphoserine. Positions 502–512 (HRRHKHKKSKR) are enriched in basic residues.

The protein belongs to the FIP1 family. As to quaternary structure, component of the cleavage and polyadenylation specificity factor (CPSF) complex, composed of CPSF1, CPSF2, CPSF3, CPSF4 and FIP1L1. Found in a complex with CPSF1, FIP1L1 and PAPOLA. Interacts with CPSF1, CPSF4, CSTF2 and CSTF3. Interacts with AHCYL1 (when phosphorylated); the interaction is direct and associates AHCYL1 with the CPSF complex and RNA. Interacts with PAPOLA; the interaction seems to be increased by the interaction with AHCYL1. Interacts with NUDT21/CPSF5; this interaction occurs in a RNA sequence-specific manner. Interacts (preferentially via unphosphorylated form and Arg/Glu/Asp-rich domain) with CPSF6 (via Arg/Ser-rich domain); this interaction mediates, at least in part, the interaction between the CFIm and CPSF complexes and may be inhibited by CPSF6 hyper-phosphorylation. Interacts (preferentially via unphosphorylated form and Arg/Asp/Glu-rich domain) with CPSF7 (via Arg/Ser-rich domain); this interaction mediates, at least in part, the interaction between the CFIm and CPSF complexes and may be inhibited by CPSF7 hyper-phosphorylation.

It localises to the nucleus. In terms of biological role, component of the cleavage and polyadenylation specificity factor (CPSF) complex that plays a key role in pre-mRNA 3'-end formation, recognizing the AAUAAA signal sequence and interacting with poly(A) polymerase and other factors to bring about cleavage and poly(A) addition. FIP1L1 contributes to poly(A) site recognition and stimulates poly(A) addition. Binds to U-rich RNA sequence elements surrounding the poly(A) site. May act to tether poly(A) polymerase to the CPSF complex. The polypeptide is Pre-mRNA 3'-end-processing factor FIP1 (Fip1l1) (Rattus norvegicus (Rat)).